Consider the following 135-residue polypeptide: Large ribosomal subunit protein uL16 (135 aa).

It belongs to the universal ribosomal protein uL16 family. Part of the 50S ribosomal subunit.

In terms of biological role, binds 23S rRNA and is also seen to make contacts with the A and possibly P site tRNAs. This is Large ribosomal subunit protein uL16 from Desulfatibacillum aliphaticivorans.